The following is a 517-amino-acid chain: MVLSDKELFAINKKAVEQGFNVKPRLNYNTVSGVNGPLVILEKVKFPRYNEIVNLTLPDGTVRQGQVLEIRGDRAIVQVFEGTSGIDVKKTTVEFTGESLRIPVSEDMLGRIFDGSGRPIDNGPKVFAEDYLDINGSPINPYARIYPEEMISTGVSAIDTMNSIARGQKIPIFSASGLPHNEIAAQICRQAGLVRPTKDVHDGHEENFSIVFAAMGVNLETARFFKQDFEENGSLERTSLFLNLANDPTIERIITPRLALTTAEYLAYQTERHVLTILTDMSSYADALREVSAAREEVPGRRGYPGYMYTDLSTIYERAGRVEGRNGSITQIPILTMPNDDITHPIPDLTGYITEGQIFVDRQLHNKGIYPPINVLPSLSRLMKSAIGEGMTRKDHGDVSNQLYAKYAIGKDAAAMKAVVGEEALSIEDKLSLEFLEKFEKTFITQGAYEDRTVFESLDQAWSLLRIYPKEMLNRISPKILDEFYDRARDDADEDEEDPDTRSSGKKKDASQEESLI.

Phosphoserine is present on serine 4. Lysine 14 is covalently cross-linked (Glycyl lysine isopeptide (Lys-Gly) (interchain with G-Cter in ubiquitin)). Serine 137 is subject to Phosphoserine. Position 381 (arginine 381) interacts with ATP. Residues 487–517 are disordered; sequence RARDDADEDEEDPDTRSSGKKKDASQEESLI. Residues 500–511 show a composition bias toward basic and acidic residues; it reads DTRSSGKKKDAS. 2 positions are modified to phosphoserine: serine 503 and serine 504. Lysine 508 participates in a covalent cross-link: Glycyl lysine isopeptide (Lys-Gly) (interchain with G-Cter in ubiquitin). A Phosphoserine; by ATM or ATR modification is found at serine 511. Serine 515 carries the phosphoserine modification.

This sequence belongs to the ATPase alpha/beta chains family. As to quaternary structure, V-ATPase is a heteromultimeric enzyme composed of a peripheral catalytic V1 complex (components A to H) attached to an integral membrane V0 proton pore complex (components: a, c, c', c'', d, e, f and VOA1). Interacts with RAV1 and RAV2 components of the RAVE complex, which are essential for the stability and assembly of V-ATPase.

Its subcellular location is the vacuole membrane. Functionally, non-catalytic subunit of the V1 complex of vacuolar(H+)-ATPase (V-ATPase), a multisubunit enzyme composed of a peripheral complex (V1) that hydrolyzes ATP and a membrane integral complex (V0) that translocates protons. V-ATPase is responsible for acidifying and maintaining the pH of intracellular compartments. In Saccharomyces cerevisiae (strain ATCC 204508 / S288c) (Baker's yeast), this protein is V-type proton ATPase subunit B (VMA2).